We begin with the raw amino-acid sequence, 364 residues long: DNA replication and repair protein RecF (364 aa).

30 to 37 (GNNGQGKT) lines the ATP pocket.

The protein belongs to the RecF family.

The protein resides in the cytoplasm. Its function is as follows. The RecF protein is involved in DNA metabolism; it is required for DNA replication and normal SOS inducibility. RecF binds preferentially to single-stranded, linear DNA. It also seems to bind ATP. In Geobacter sp. (strain M21), this protein is DNA replication and repair protein RecF.